A 335-amino-acid chain; its full sequence is Phenylalanine--tRNA ligase alpha subunit (335 aa).

Residue glutamate 262 participates in Mg(2+) binding.

It belongs to the class-II aminoacyl-tRNA synthetase family. Phe-tRNA synthetase alpha subunit type 1 subfamily. Tetramer of two alpha and two beta subunits. Requires Mg(2+) as cofactor.

It localises to the cytoplasm. It carries out the reaction tRNA(Phe) + L-phenylalanine + ATP = L-phenylalanyl-tRNA(Phe) + AMP + diphosphate + H(+). The polypeptide is Phenylalanine--tRNA ligase alpha subunit (Prochlorococcus marinus (strain NATL2A)).